A 115-amino-acid polypeptide reads, in one-letter code: MAKKKSTAKRYKMHVKKGDTVQVIAGKDKAKVGEVIDVLPKLSQVVVEGVNMKTKHVKPRSESESGQISTVEFPIHSSNVMLYSNKENVASRVCYTFDDSGRKVRMLKKTGEIID.

It belongs to the universal ribosomal protein uL24 family. Part of the 50S ribosomal subunit.

Its function is as follows. One of two assembly initiator proteins, it binds directly to the 5'-end of the 23S rRNA, where it nucleates assembly of the 50S subunit. One of the proteins that surrounds the polypeptide exit tunnel on the outside of the subunit. In Acaryochloris marina (strain MBIC 11017), this protein is Large ribosomal subunit protein uL24.